Reading from the N-terminus, the 520-residue chain is General transcription factor 3C polypeptide 5 (520 aa).

The residue at position 2 (A2) is an N-acetylalanine. The disordered stretch occupies residues 466–520 (LFSNTGKADRGKEQLMFESGEEEEEEEEEEEEEEEDFKPSDGSENEMETEILDYV). Composition is skewed to acidic residues over residues 484–501 (SGEEEEEEEEEEEEEEED) and 508–520 (SENEMETEILDYV).

It belongs to the TFIIIC subunit 5 family. As to quaternary structure, part of the TFIIIC subcomplex TFIIIC2, consisting of six subunits, GTF3C1, GTF3C2, GTF3C3, GTF3C4, GTF3C5 and GTF3C6. Interacts with BRF1, GTF3C6 and TBP.

Its subcellular location is the nucleus. In terms of biological role, involved in RNA polymerase III-mediated transcription. Integral, tightly associated component of the DNA-binding TFIIIC2 subcomplex that directly binds tRNA and virus-associated RNA promoters. This is General transcription factor 3C polypeptide 5 (Gtf3c5) from Mus musculus (Mouse).